The primary structure comprises 337 residues: Phosphate acyltransferase (337 aa).

The protein belongs to the PlsX family. Homodimer. Probably interacts with PlsY.

It localises to the cytoplasm. It catalyses the reaction a fatty acyl-[ACP] + phosphate = an acyl phosphate + holo-[ACP]. It functions in the pathway lipid metabolism; phospholipid metabolism. Functionally, catalyzes the reversible formation of acyl-phosphate (acyl-PO(4)) from acyl-[acyl-carrier-protein] (acyl-ACP). This enzyme utilizes acyl-ACP as fatty acyl donor, but not acyl-CoA. The protein is Phosphate acyltransferase of Latilactobacillus sakei subsp. sakei (strain 23K) (Lactobacillus sakei subsp. sakei).